The chain runs to 508 residues: MGLPWYRVHTVVLNDPGRLLSVHIMHTALVAGWAGSMALYELAVFDPSDPVLDPMWRQGMFVIPFMTRLGITNSWGGWSITGGTITNPGIWSYEGVAGAHIVFSGLCFLAAIWHWVYWDLEIFCDERTGKPSLDLPKIFGIHLFLSGVACFGFGAFHVTGLYGPGIWVSDPYGLTGKVQPVNPAWGAEGFDPFVPGGIASHHIAAGTLGILAGLFHLSVRPPQRLYKGLRMGNIETVLSSSIAAVFFAAFVVAGTMWYGSATTPIELFGPTRYQWDQGYFQQEIYRRVGAGLAENLSLSEAWSKIPEKLAFYDYIGNNPAKGGLFRAGSMDNGDGIAVGWLGHPVFRDKEGRELFVRRMPTFFETFPVVLVDGDGIVRADVPFRRAESKYSVEQVGVTVEFYGGELNGVSYSDPATVKKYARRAQLGEIFELDRATLKSDGVFRSSPRGWFTFGHASFALLFFFGHIWHGARTLFRDVFAGIDPDLDAQVEFGAFQKIGDPTTRRQAV.

Transmembrane regions (helical) follow at residues serine 21–serine 36, isoleucine 101–tryptophan 115, glycine 140–phenylalanine 156, isoleucine 203–serine 218, valine 237–valine 252, and serine 457–arginine 472.

It belongs to the PsbB/PsbC family. PsbB subfamily. As to quaternary structure, PSII is composed of 1 copy each of membrane proteins PsbA, PsbB, PsbC, PsbD, PsbE, PsbF, PsbH, PsbI, PsbJ, PsbK, PsbL, PsbM, PsbT, PsbX, PsbY, PsbZ, Psb30/Ycf12, at least 3 peripheral proteins of the oxygen-evolving complex and a large number of cofactors. It forms dimeric complexes. The cofactor is Binds multiple chlorophylls. PSII binds additional chlorophylls, carotenoids and specific lipids..

The protein localises to the plastid. Its subcellular location is the chloroplast thylakoid membrane. One of the components of the core complex of photosystem II (PSII). It binds chlorophyll and helps catalyze the primary light-induced photochemical processes of PSII. PSII is a light-driven water:plastoquinone oxidoreductase, using light energy to abstract electrons from H(2)O, generating O(2) and a proton gradient subsequently used for ATP formation. The chain is Photosystem II CP47 reaction center protein from Acorus calamus var. americanus (American sweet flag).